The primary structure comprises 347 residues: DNA-directed RNA polymerase subunit alpha (347 aa).

An alpha N-terminal domain (alpha-NTD) region spans residues 1 to 226 (MLISQRPTLS…ELFGLARELN (226 aa)). An alpha C-terminal domain (alpha-CTD) region spans residues 243 to 347 (HIASFALPID…EQDYAETEQL (105 aa)).

Belongs to the RNA polymerase alpha chain family. As to quaternary structure, homodimer. The RNAP catalytic core consists of 2 alpha, 1 beta, 1 beta' and 1 omega subunit. When a sigma factor is associated with the core the holoenzyme is formed, which can initiate transcription.

It carries out the reaction RNA(n) + a ribonucleoside 5'-triphosphate = RNA(n+1) + diphosphate. DNA-dependent RNA polymerase catalyzes the transcription of DNA into RNA using the four ribonucleoside triphosphates as substrates. The sequence is that of DNA-directed RNA polymerase subunit alpha from Mycobacterium bovis (strain ATCC BAA-935 / AF2122/97).